Consider the following 219-residue polypeptide: Interleukin-12 subunit alpha (219 aa).

Residues methionine 1–alanine 22 form the signal peptide. N-linked (GlcNAc...) asparagine glycosylation is found at asparagine 24 and asparagine 93. Intrachain disulfides connect cysteine 37–cysteine 110, cysteine 64–cysteine 196, and cysteine 85–cysteine 123.

This sequence belongs to the IL-6 superfamily. As to quaternary structure, heterodimer with IL12B; disulfide-linked. This heterodimer is known as interleukin IL-12. Heterodimer with EBI3/IL27B; not disulfide-linked. This heterodimer is known as interleukin IL-35. Interacts with NBR1; this interaction promotes IL-12 secretion.

Its subcellular location is the secreted. Its function is as follows. Heterodimerizes with IL12B to form the IL-12 cytokine or with EBI3/IL27B to form the IL-35 cytokine. IL-12 is primarily produced by professional antigen-presenting cells (APCs) such as B-cells and dendritic cells (DCs) as well as macrophages and granulocytes and regulates T-cell and natural killer-cell responses, induces the production of interferon-gamma (IFN-gamma), favors the differentiation of T-helper 1 (Th1) cells and is an important link between innate resistance and adaptive immunity. Mechanistically, exerts its biological effects through a receptor composed of IL12R1 and IL12R2 subunits. Binding to the receptor results in the rapid tyrosine phosphorylation of a number of cellular substrates including the JAK family kinases TYK2 and JAK2. In turn, recruited STAT4 gets phosphorylated and translocates to the nucleus where it regulates cytokine/growth factor responsive genes. As part of IL-35, plays essential roles in maintaining the immune homeostasis of the liver microenvironment and also functions as an immune-suppressive cytokine. Mediates biological events through unconventional receptors composed of IL12RB2 and gp130/IL6ST heterodimers or homodimers. Signaling requires the transcription factors STAT1 and STAT4, which form a unique heterodimer that binds to distinct DNA sites. The sequence is that of Interleukin-12 subunit alpha (IL12A) from Papio anubis (Olive baboon).